A 623-amino-acid polypeptide reads, in one-letter code: Glutathione import ATP-binding protein GsiA (623 aa).

2 consecutive ABC transporter domains span residues 15 to 269 (VSGL…QTLL) and 325 to 564 (LRSG…RKLM). Residues 49-56 (GESGSGKS) and 357-364 (GESGSGKS) each bind ATP.

Belongs to the ABC transporter superfamily. Glutathione importer (TC 3.A.1.5.11) family. As to quaternary structure, the complex is composed of two ATP-binding proteins (GsiA), two transmembrane proteins (GsiC and GsiD) and a solute-binding protein (GsiB).

It is found in the cell inner membrane. The enzyme catalyses glutathione(out) + ATP + H2O = glutathione(in) + ADP + phosphate + H(+). Its function is as follows. Part of the ABC transporter complex GsiABCD involved in glutathione import. Responsible for energy coupling to the transport system. This chain is Glutathione import ATP-binding protein GsiA, found in Salmonella typhi.